Consider the following 191-residue polypeptide: MSDHENTGENTSEYQYKQPPQKSIDELLNADKEDESLKVYKAKLLGQGTVIVDEKNPLRVIVRSVELLINGKTAQSFDLSDPAKLVNSDLSVSIKEGSNYRLSFAFHVQREITSGLHYKHKVKRSGITVENEKYMMGSYAPKLEIQEYKSPNEEAPSGMMHRGKYKVYSKITDDDNNVYLDWQWTLHITKE.

The interval 1–22 (MSDHENTGENTSEYQYKQPPQK) is disordered. A compositionally biased stretch (polar residues) spans 8–21 (GENTSEYQYKQPPQ).

It belongs to the Rho GDI family.

It localises to the cytoplasm. In terms of biological role, regulates the GDP/GTP exchange reaction of the Rho proteins by inhibiting the dissociation of GDP from them, and the subsequent binding of GTP to them. This is Probable rho GDP-dissociation inhibitor (rhi-1) from Caenorhabditis elegans.